We begin with the raw amino-acid sequence, 410 residues long: Chloride intracellular channel protein 5 (410 aa).

The G-site motif lies at 191–194 (CPFS). The helical transmembrane segment at 193–213 (FSQRLFMILWLKGVVFNVTTV) threads the bilayer. A GST C-terminal domain is found at 260–400 (YPKLAAKHRE…AADSEIELAY (141 aa)).

This sequence belongs to the chloride channel CLIC family. Component of a multimeric complex consisting of several cytoskeletal proteins, including actin, ezrin, alpha-actinin, gelsolin, and IQGAP1. Interacts with AKAP9. Interacts with TPRN. TPRN, CLIC5 and PTPQR form concentric rings at the base of stereocilia and may form a complex. Interacts with EZR, MYO6 and RDX; the proteins may work together as a complex to stabilize linkages between the plasma membrane and subjacent actin cytoskeleton at the stereocilium base. In terms of tissue distribution, widely expressed in both fetal and adult human tissues. Isoform 1 is expressed in renal glomeruli endothelial cells and podocytes (at protein level).

Its subcellular location is the cytoplasm. The protein localises to the cytoskeleton. The protein resides in the cell cortex. It is found in the membrane. It localises to the apical cell membrane. Its subcellular location is the mitochondrion. The protein localises to the cell projection. The protein resides in the stereocilium. It is found in the golgi apparatus. It localises to the microtubule organizing center. Its subcellular location is the centrosome. It carries out the reaction chloride(in) = chloride(out). The catalysed reaction is Na(+)(in) = Na(+)(out). The enzyme catalyses K(+)(in) = K(+)(out). With respect to regulation, inhibited by F-actin. Its function is as follows. In the soluble state, catalyzes glutaredoxin-like thiol disulfide exchange reactions with reduced glutathione as electron donor. Can insert into membranes and form non-selective ion channels almost equally permeable to Na(+), K(+) and Cl(-). Required for normal hearing. It is necessary for the formation of stereocilia in the inner ear and normal development of the organ of Corti. May play a role in the regulation of transepithelial ion absorption and secretion. Is required for the development and/or maintenance of the proper glomerular endothelial cell and podocyte architecture. Plays a role in formation of the lens suture in the eye, which is important for normal optical properties of the lens. The chain is Chloride intracellular channel protein 5 from Homo sapiens (Human).